The sequence spans 202 residues: Josephin-1 (202 aa).

Ser-15 carries the phosphoserine modification. A Josephin domain is found at 23-202 (PPQIYHEKQR…EAHQSWRADV (180 aa)). Cys-36 serves as the catalytic Nucleophile. The active-site Proton acceptor is His-139.

As to quaternary structure, interacts with beta-actin/ACTB. In terms of processing, monoubiquitinated. Ubiquitination activates deubiquitination activity in vitro.

It is found in the cell membrane. It localises to the cytoplasm. The catalysed reaction is Thiol-dependent hydrolysis of ester, thioester, amide, peptide and isopeptide bonds formed by the C-terminal Gly of ubiquitin (a 76-residue protein attached to proteins as an intracellular targeting signal).. In terms of biological role, deubiquitinates monoubiquitinated probes (in vitro). When ubiquitinated, cleaves 'Lys-63'-linked and 'Lys-48'-linked poly-ubiquitin chains (in vitro), hence may act as a deubiquitinating enzyme. May increase macropinocytosis and suppress clathrin- and caveolae-mediated endocytosis. May enhance membrane dynamics and cell motility independently of its catalytic activity. The polypeptide is Josephin-1 (JOSD1) (Bos taurus (Bovine)).